The chain runs to 375 residues: Alcohol dehydrogenase class-3 chain L (375 aa).

At alanine 1 the chain carries N-acetylalanine. The Zn(2+) site is built by cysteine 46, histidine 68, cysteine 98, cysteine 101, cysteine 104, cysteine 112, and cysteine 175.

This sequence belongs to the zinc-containing alcohol dehydrogenase family. Class-III subfamily. Homodimer or heterodimer with H chain. The cofactor is Zn(2+).

The protein resides in the cytoplasm. The catalysed reaction is a primary alcohol + NAD(+) = an aldehyde + NADH + H(+). It carries out the reaction a secondary alcohol + NAD(+) = a ketone + NADH + H(+). The enzyme catalyses S-(hydroxymethyl)glutathione + NADP(+) = S-formylglutathione + NADPH + H(+). It catalyses the reaction S-(hydroxymethyl)glutathione + NAD(+) = S-formylglutathione + NADH + H(+). Its function is as follows. Class-III ADH is remarkably ineffective in oxidizing ethanol, but it readily catalyzes the oxidation of long-chain primary alcohols and the oxidation of S-(hydroxymethyl) glutathione. The sequence is that of Alcohol dehydrogenase class-3 chain L from Gadus morhua (Atlantic cod).